A 186-amino-acid polypeptide reads, in one-letter code: Photosystem I assembly protein Ycf4 (186 aa).

A run of 2 helical transmembrane segments spans residues Phe22–Ser42 and Ile57–Ser77.

This sequence belongs to the Ycf4 family.

It is found in the plastid. It localises to the chloroplast thylakoid membrane. Functionally, seems to be required for the assembly of the photosystem I complex. This is Photosystem I assembly protein Ycf4 from Dioscorea elephantipes (Elephant's foot yam).